The chain runs to 204 residues: Somatotropin (204 aa).

The signal sequence occupies residues 1-17 (MDRAILLLSVVCLVVSS). The residue at position 18 (Gln18) is a Pyrrolidone carboxylic acid. A Zn(2+)-binding site is contributed by His36. A disulfide bond links Cys69 and Cys177. Glu186 provides a ligand contact to Zn(2+). Cys194 and Cys202 are disulfide-bonded.

The protein belongs to the somatotropin/prolactin family.

The protein resides in the secreted. Functionally, growth hormone plays an important role in growth control and is involved in the regulation of several anabolic processes. Implicated as an osmoregulatory substance important for seawater adaptation. In Odontesthes argentinensis (Marine silverside), this protein is Somatotropin (gh).